Here is a 198-residue protein sequence, read N- to C-terminus: Probable chemoreceptor glutamine deamidase CheD (198 aa).

This sequence belongs to the CheD family.

The enzyme catalyses L-glutaminyl-[protein] + H2O = L-glutamyl-[protein] + NH4(+). In terms of biological role, probably deamidates glutamine residues to glutamate on methyl-accepting chemotaxis receptors (MCPs), playing an important role in chemotaxis. The protein is Probable chemoreceptor glutamine deamidase CheD of Xanthomonas campestris pv. campestris (strain 8004).